The sequence spans 515 residues: Maturase K (515 aa).

This sequence belongs to the intron maturase 2 family. MatK subfamily.

The protein localises to the plastid. The protein resides in the chloroplast. Usually encoded in the trnK tRNA gene intron. Probably assists in splicing its own and other chloroplast group II introns. In Ceratophyllum demersum (Rigid hornwort), this protein is Maturase K.